An 80-amino-acid polypeptide reads, in one-letter code: Small, acid-soluble spore protein Tlp (80 aa).

The protein belongs to the Tlp family.

It is found in the spore core. This is Small, acid-soluble spore protein Tlp from Bacillus pumilus (strain SAFR-032).